The following is a 178-amino-acid chain: Bifunctional protein PyrR (178 aa).

Residues 42–43, arginine 83, 103–111, arginine 136, and valine 160 contribute to the substrate site; these read TR and DDVIYKGRT. The short motif at 99–111 is the PRPP-binding element; it reads VVLVDDVIYKGRT.

It belongs to the purine/pyrimidine phosphoribosyltransferase family. PyrR subfamily.

It carries out the reaction UMP + diphosphate = 5-phospho-alpha-D-ribose 1-diphosphate + uracil. Its function is as follows. Regulates the transcription of the pyrimidine nucleotide (pyr) operon in response to exogenous pyrimidines. Also displays a weak uracil phosphoribosyltransferase activity which is not physiologically significant. In Synechocystis sp. (strain ATCC 27184 / PCC 6803 / Kazusa), this protein is Bifunctional protein PyrR.